The following is an 88-amino-acid chain: Large ribosomal subunit protein bL31B (88 aa).

It belongs to the bacterial ribosomal protein bL31 family. Type B subfamily. In terms of assembly, part of the 50S ribosomal subunit.

The sequence is that of Large ribosomal subunit protein bL31B from Bordetella bronchiseptica (strain ATCC BAA-588 / NCTC 13252 / RB50) (Alcaligenes bronchisepticus).